Reading from the N-terminus, the 337-residue chain is Fructose-1,6-bisphosphatase class 1 (337 aa).

Mg(2+) is bound by residues Glu-92, Asp-114, Leu-116, and Asp-117. Residues 117–120, Asn-209, and Lys-275 contribute to the substrate site; that span reads DGSS. Mg(2+) is bound at residue Glu-281.

Belongs to the FBPase class 1 family. Homotetramer. Mg(2+) is required as a cofactor.

Its subcellular location is the cytoplasm. The catalysed reaction is beta-D-fructose 1,6-bisphosphate + H2O = beta-D-fructose 6-phosphate + phosphate. It functions in the pathway carbohydrate biosynthesis; gluconeogenesis. The protein is Fructose-1,6-bisphosphatase class 1 of Thiobacillus denitrificans (strain ATCC 25259 / T1).